The primary structure comprises 227 residues: Large ribosomal subunit protein uL3 (227 aa).

Belongs to the universal ribosomal protein uL3 family. As to quaternary structure, part of the 50S ribosomal subunit. Forms a cluster with proteins L14 and L19.

Functionally, one of the primary rRNA binding proteins, it binds directly near the 3'-end of the 23S rRNA, where it nucleates assembly of the 50S subunit. In Leuconostoc citreum (strain KM20), this protein is Large ribosomal subunit protein uL3.